A 116-amino-acid polypeptide reads, in one-letter code: Somatostatin (116 aa).

The first 24 residues, 1–24 (MLSCRLQCALALLSIALAVGTVSA), serve as a signal peptide directing secretion. Residues 25-88 (APSDPRLRQF…QDEVRLELER (64 aa)) constitute a propeptide that is removed on maturation. Positions 60 to 82 (PSQTENEALESEDLSRGAEQDEV) are disordered. Residues 72-82 (DLSRGAEQDEV) are compositionally biased toward basic and acidic residues. Cys-105 and Cys-116 form a disulfide bridge.

The protein belongs to the somatostatin family.

The protein resides in the secreted. Functionally, somatostatin inhibits the release of somatotropin. The chain is Somatostatin (SST) from Gallus gallus (Chicken).